We begin with the raw amino-acid sequence, 274 residues long: tRNA-cytidine(32) 2-sulfurtransferase (274 aa).

Residues 40 to 45 (SGGKDS) carry the PP-loop motif motif. Positions 115, 118, and 206 each coordinate [4Fe-4S] cluster.

Belongs to the TtcA family. Homodimer. Requires Mg(2+) as cofactor. The cofactor is [4Fe-4S] cluster.

Its subcellular location is the cytoplasm. The catalysed reaction is cytidine(32) in tRNA + S-sulfanyl-L-cysteinyl-[cysteine desulfurase] + AH2 + ATP = 2-thiocytidine(32) in tRNA + L-cysteinyl-[cysteine desulfurase] + A + AMP + diphosphate + H(+). It participates in tRNA modification. In terms of biological role, catalyzes the ATP-dependent 2-thiolation of cytidine in position 32 of tRNA, to form 2-thiocytidine (s(2)C32). The sulfur atoms are provided by the cysteine/cysteine desulfurase (IscS) system. The chain is tRNA-cytidine(32) 2-sulfurtransferase from Azotobacter vinelandii (strain DJ / ATCC BAA-1303).